A 224-amino-acid chain; its full sequence is uncharacterized protein (224 aa).

Helical transmembrane passes span 25 to 45 (ALAW…IYGI), 56 to 76 (VFLI…VILP), 107 to 127 (ELFL…YFFV), and 149 to 169 (IFVK…VVYF).

It is found in the cell membrane. This is an uncharacterized protein from Mycoplasma pneumoniae (strain ATCC 29342 / M129 / Subtype 1) (Mycoplasmoides pneumoniae).